We begin with the raw amino-acid sequence, 446 residues long: C4-dicarboxylate transport protein (446 aa).

The next 9 helical transmembrane spans lie at 25–45, 58–78, 93–113, 159–179, 199–219, 236–256, 322–342, 370–390, and 400–420; these read VQVL…PAIG, LVKM…IASI, FAYF…VANV, ALTE…GLAL, VFFG…FGAM, LLIA…LGAV, IYMT…LSLG, AATL…ILGI, and LTNF…EKGL.

Belongs to the dicarboxylate/amino acid:cation symporter (DAACS) (TC 2.A.23) family.

Its subcellular location is the cell inner membrane. In terms of biological role, responsible for the transport of dicarboxylates such as succinate, fumarate, and malate from the periplasm across the membrane. The protein is C4-dicarboxylate transport protein of Sphingopyxis alaskensis (strain DSM 13593 / LMG 18877 / RB2256) (Sphingomonas alaskensis).